The following is a 49-amino-acid chain: Large ribosomal subunit protein bL32c (49 aa).

A disordered region spans residues 1-23 (MTPKKRKSKSKKNLRKTNWKKKA).

It belongs to the bacterial ribosomal protein bL32 family.

Its subcellular location is the plastid. The protein localises to the chloroplast. In Oltmannsiellopsis viridis (Marine flagellate), this protein is Large ribosomal subunit protein bL32c.